The sequence spans 611 residues: MWTGGRRPGRLRRAASAADMEKLSALQEQKGELRKRLSYTTHKLEKLETEFDSTRHYLEIELRRAQEELDKVTEKLRRIQSNYMALQRINQELEDKLYRMGQHYEEEKRAMSHEIVALNSHLLEAKVTIDKLSEDNELYRKDCNLAAQLLQCSQTYGRVHKVSELPSDFQQRVSLHMEKHGCSLPSPLCHPSYADSVPTCVIAKVLEKPDPGSLSSRMSDASARDLAYRDGVENPGPRPPYKGDIYCSDTALYCPDERDHDRRPSVDTPVTDVGFLRAQNSTDSLAEEEEAEAAAFPEAYRREAFQGYAASLPTSSSYSSFSATSEEKEHAQASTLTASQQAIYLNSREELFSRKPPSATYGSSPRYAKAAATLGSPLEAQVAPGFARTVSPYPAEPYRYPASQQALMPPNLWSLRAKPSGNRLAAREDIRGQWRPLSVEDVGAYSYQAGAAGRAASPCNFSERFYGGGGGGGSPGKNAEGRASPLYASYKADSFSEGDDLSQGHLAEPCFLRAGGDLSLSPSRSADPLPGYATSDGDGDRLGVQLCGPGSSPEPEHGSRDSLEPSSMEASPEMHPPTRLSPQQAFPRTGGSGLSRKDSLTKAQLYGTLLN.

The residue at position 156 (Y156) is a Phosphotyrosine. A phosphoserine mark is found at S219, S248, and S265. T268 bears the Phosphothreonine mark. S284, S364, and S391 each carry phosphoserine. The residue at position 399 (R399) is an Asymmetric dimethylarginine. S474, S484, S494, S496, S519, S521, and S525 each carry phosphoserine. The tract at residues 520 to 611 (LSPSRSADPL…KAQLYGTLLN (92 aa)) is disordered. Residues 554–563 (EPEHGSRDSL) are compositionally biased toward basic and acidic residues. 2 positions are modified to phosphoserine: S571 and S581.

In terms of assembly, interacts with DLG4 and DLGAP1 and forms a ternary complex. In terms of tissue distribution, brain-specific. Expressed in neurons and rather enriched at synaptic junctions.

It localises to the cytoplasm. It is found in the membrane. Its function is as follows. May sustain the structure of the postsynaptic density (PSD). The protein is Brain-enriched guanylate kinase-associated protein (Begain) of Rattus norvegicus (Rat).